The primary structure comprises 361 residues: Histidinol-phosphate aminotransferase (361 aa).

Lys-218 bears the N6-(pyridoxal phosphate)lysine mark.

This sequence belongs to the class-II pyridoxal-phosphate-dependent aminotransferase family. Histidinol-phosphate aminotransferase subfamily. In terms of assembly, homodimer. The cofactor is pyridoxal 5'-phosphate.

It catalyses the reaction L-histidinol phosphate + 2-oxoglutarate = 3-(imidazol-4-yl)-2-oxopropyl phosphate + L-glutamate. Its pathway is amino-acid biosynthesis; L-histidine biosynthesis; L-histidine from 5-phospho-alpha-D-ribose 1-diphosphate: step 7/9. In Ruegeria pomeroyi (strain ATCC 700808 / DSM 15171 / DSS-3) (Silicibacter pomeroyi), this protein is Histidinol-phosphate aminotransferase.